Here is a 342-residue protein sequence, read N- to C-terminus: Heat-inducible transcription repressor HrcA (342 aa).

The protein belongs to the HrcA family.

Its function is as follows. Negative regulator of class I heat shock genes (grpE-dnaK-dnaJ and groELS operons). Prevents heat-shock induction of these operons. The protein is Heat-inducible transcription repressor HrcA of Acholeplasma laidlawii.